The primary structure comprises 203 residues: Small ribosomal subunit protein uS5 (203 aa).

The S5 DRBM domain maps to phenylalanine 49–valine 112.

Belongs to the universal ribosomal protein uS5 family. Part of the 30S ribosomal subunit. Contacts proteins S4 and S8.

With S4 and S12 plays an important role in translational accuracy. Its function is as follows. Located at the back of the 30S subunit body where it stabilizes the conformation of the head with respect to the body. This is Small ribosomal subunit protein uS5 from Ureaplasma parvum serovar 3 (strain ATCC 700970).